The chain runs to 378 residues: MLAPRRKTRQLMVGSVGVGSDHPISVQSMTTTKTHDINATLQQIAQLTASGCDIVRVACPKPVDAEALPIIAKKSPIPVIADIHFQPKYIFSAIDAGCAAVRVNPGNIKEFDGRVKEVAQAAGDAGIPIRIGVNGGSLDKRILDKYHGKATPEALVESALWEASLFEEHGYGDIAISVKHSDPVLMVEAYRQLAEKCDYPLHLGVTEAGPKFMGTIKSSVAFGALLSQGIGDTIRVSLSADPVEEIKVGDQILQSLNLRPRKLEIVSCPSCGRAQVDVYKLAEEVTEGLDGLEVPLRVAVMGCVVNGPGEARDADLGVASGNGKGQIFVKGEIIKTVPESQIVQTLIEEAMRIAETMDPEVLAAAEASGMKAEVKVTS.

The [4Fe-4S] cluster site is built by Cys268, Cys271, Cys303, and Glu310.

It belongs to the IspG family. [4Fe-4S] cluster is required as a cofactor.

It carries out the reaction (2E)-4-hydroxy-3-methylbut-2-enyl diphosphate + oxidized [flavodoxin] + H2O + 2 H(+) = 2-C-methyl-D-erythritol 2,4-cyclic diphosphate + reduced [flavodoxin]. It functions in the pathway isoprenoid biosynthesis; isopentenyl diphosphate biosynthesis via DXP pathway; isopentenyl diphosphate from 1-deoxy-D-xylulose 5-phosphate: step 5/6. Its function is as follows. Converts 2C-methyl-D-erythritol 2,4-cyclodiphosphate (ME-2,4cPP) into 1-hydroxy-2-methyl-2-(E)-butenyl 4-diphosphate. The sequence is that of 4-hydroxy-3-methylbut-2-en-1-yl diphosphate synthase (flavodoxin) from Corynebacterium efficiens (strain DSM 44549 / YS-314 / AJ 12310 / JCM 11189 / NBRC 100395).